The sequence spans 41 residues: Putative toxic protein TimP (41 aa).

A transmembrane span lies at residues 1-17; sequence MKIRCFCIVLIVSGALL.

It belongs to the TimP toxin family.

It localises to the cell inner membrane. In terms of biological role, putative toxic component of a potential type I toxin-antitoxin (TA) system. Neutralized by sRNA antitoxin TimR which binds to the 5' UTR of timP mRNA and inhibits translation. The antitoxin gene is encoded immediately upstream and transcribed divergently from the toxin gene; antitoxin RNA is less stable than timP mRNA. This chain is Putative toxic protein TimP, found in Escherichia coli (strain K12).